Reading from the N-terminus, the 362-residue chain is Phosphoserine aminotransferase (362 aa).

L-glutamate-binding residues include Ser-9 and Arg-42. Residues 76–77 (GR), Trp-102, Thr-153, Asp-174, and Gln-197 contribute to the pyridoxal 5'-phosphate site. The residue at position 198 (Lys-198) is an N6-(pyridoxal phosphate)lysine. Position 239–240 (239–240 (NT)) interacts with pyridoxal 5'-phosphate.

This sequence belongs to the class-V pyridoxal-phosphate-dependent aminotransferase family. SerC subfamily. As to quaternary structure, homodimer. Pyridoxal 5'-phosphate serves as cofactor.

The protein localises to the cytoplasm. It catalyses the reaction O-phospho-L-serine + 2-oxoglutarate = 3-phosphooxypyruvate + L-glutamate. The enzyme catalyses 4-(phosphooxy)-L-threonine + 2-oxoglutarate = (R)-3-hydroxy-2-oxo-4-phosphooxybutanoate + L-glutamate. It participates in amino-acid biosynthesis; L-serine biosynthesis; L-serine from 3-phospho-D-glycerate: step 2/3. The protein operates within cofactor biosynthesis; pyridoxine 5'-phosphate biosynthesis; pyridoxine 5'-phosphate from D-erythrose 4-phosphate: step 3/5. Its function is as follows. Catalyzes the reversible conversion of 3-phosphohydroxypyruvate to phosphoserine and of 3-hydroxy-2-oxo-4-phosphonooxybutanoate to phosphohydroxythreonine. This is Phosphoserine aminotransferase from Salmonella choleraesuis (strain SC-B67).